Reading from the N-terminus, the 355-residue chain is Nicotinate-nucleotide--dimethylbenzimidazole phosphoribosyltransferase (355 aa).

Glu321 (proton acceptor) is an active-site residue.

This sequence belongs to the CobT family.

The catalysed reaction is 5,6-dimethylbenzimidazole + nicotinate beta-D-ribonucleotide = alpha-ribazole 5'-phosphate + nicotinate + H(+). It participates in nucleoside biosynthesis; alpha-ribazole biosynthesis; alpha-ribazole from 5,6-dimethylbenzimidazole: step 1/2. Functionally, catalyzes the synthesis of alpha-ribazole-5'-phosphate from nicotinate mononucleotide (NAMN) and 5,6-dimethylbenzimidazole (DMB). This is Nicotinate-nucleotide--dimethylbenzimidazole phosphoribosyltransferase from Desulfotalea psychrophila (strain LSv54 / DSM 12343).